Here is a 204-residue protein sequence, read N- to C-terminus: Proteasome subunit beta (204 aa).

A propeptide spans 1–8 (removed in mature form; by autocatalysis); sequence MDDKILEG. T9 functions as the Nucleophile in the catalytic mechanism.

Belongs to the peptidase T1B family. As to quaternary structure, the 20S proteasome core is composed of 14 alpha and 14 beta subunits that assemble into four stacked heptameric rings, resulting in a barrel-shaped structure. The two inner rings, each composed of seven catalytic beta subunits, are sandwiched by two outer rings, each composed of seven alpha subunits. The catalytic chamber with the active sites is on the inside of the barrel. Has a gated structure, the ends of the cylinder being occluded by the N-termini of the alpha-subunits. Is capped at one or both ends by the proteasome regulatory ATPase, PAN.

The protein localises to the cytoplasm. The enzyme catalyses Cleavage of peptide bonds with very broad specificity.. With respect to regulation, the formation of the proteasomal ATPase PAN-20S proteasome complex, via the docking of the C-termini of PAN into the intersubunit pockets in the alpha-rings, triggers opening of the gate for substrate entry. Interconversion between the open-gate and close-gate conformations leads to a dynamic regulation of the 20S proteasome proteolysis activity. Component of the proteasome core, a large protease complex with broad specificity involved in protein degradation. The protein is Proteasome subunit beta of Methanobrevibacter smithii (strain ATCC 35061 / DSM 861 / OCM 144 / PS).